The following is a 476-amino-acid chain: mRNA cap guanine-N(7) methyltransferase (476 aa).

Basic and acidic residues predominate over residues 1-14; sequence MANSAKAEEYEKMS. Positions 1–146 are disordered; sequence MANSAKAEEY…KQKNLEEGHS (146 aa). Residues 20-50 show a composition bias toward polar residues; that stretch reads ASVNSETESSFNINENTTASGTGLSEKTSVC. Residues S24, S28, and S29 each carry the phosphoserine modification. Basic and acidic residues-rich tracts occupy residues 54-68 and 84-118; these read DIAR…DLVK and LDPE…DKSS. A Phosphoserine modification is found at S118. A Nuclear localization signal motif is present at residues 126-128; it reads KRK. Basic and acidic residues predominate over residues 129–145; it reads IALEDVPEKQKNLEEGH. Residues 167 to 475 enclose the mRNA cap 0 methyltransferase domain; that stretch reads SRIFYLRNFN…IYLVFAFEKQ (309 aa). 176-177 contributes to the mRNA binding site; that stretch reads NN. S-adenosyl-L-methionine-binding residues include K180, G205, D227, D261, Q284, and Y289.

Belongs to the class I-like SAM-binding methyltransferase superfamily. mRNA cap 0 methyltransferase family. In terms of assembly, interacts with importin alpha, leading to stimulate both RNA-binding and methyltransferase activity. Interaction with importin alpha and beta is required for its nuclear localization, importin beta dissociating in response to RanGTP, allowing RNMT-importin alpha to bind RNA substrates. Interacts with elongating form of polymerase II and RNGTT. Interacts with RAMAC, this interaction significantly enhances RNA-binding and cap methyltransferase activity. As to expression, widely expressed.

Its subcellular location is the nucleus. The enzyme catalyses a 5'-end (5'-triphosphoguanosine)-ribonucleoside in mRNA + S-adenosyl-L-methionine = a 5'-end (N(7)-methyl 5'-triphosphoguanosine)-ribonucleoside in mRNA + S-adenosyl-L-homocysteine. Methyltransferase activity is activated by RAMAC. Its function is as follows. Catalytic subunit of the mRNA-capping methyltransferase RNMT:RAMAC complex that methylates the N7 position of the added guanosine to the 5'-cap structure of mRNAs. Binds RNA containing 5'-terminal GpppC. The polypeptide is mRNA cap guanine-N(7) methyltransferase (RNMT) (Homo sapiens (Human)).